Consider the following 53-residue polypeptide: ATP synthase protein 8 (53 aa).

A helical membrane pass occupies residues 10-30 (IMVFLVSMALLWAIMTMVFFL).

It belongs to the ATPase protein 8 family. As to quaternary structure, F-type ATPases have 2 components, CF(1) - the catalytic core - and CF(0) - the membrane proton channel.

It is found in the mitochondrion membrane. Functionally, mitochondrial membrane ATP synthase (F(1)F(0) ATP synthase or Complex V) produces ATP from ADP in the presence of a proton gradient across the membrane which is generated by electron transport complexes of the respiratory chain. F-type ATPases consist of two structural domains, F(1) - containing the extramembraneous catalytic core and F(0) - containing the membrane proton channel, linked together by a central stalk and a peripheral stalk. During catalysis, ATP synthesis in the catalytic domain of F(1) is coupled via a rotary mechanism of the central stalk subunits to proton translocation. Part of the complex F(0) domain. Minor subunit located with subunit a in the membrane. The sequence is that of ATP synthase protein 8 (MT-ATP8) from Artemia franciscana (Brine shrimp).